Reading from the N-terminus, the 262-residue chain is Rhomboid-type serine protease 2 (262 aa).

Over 1–16 (MNWKSYVFPGGHPPAA) the chain is Cytoplasmic. The chain crosses the membrane as a helical span at residues 17 to 37 (LTTGLVVFLTAIYLLSFIFAL). Residues 38-57 (REDLSLAPESLFKLQMSRLS) are Lumenal-facing. The chain crosses the membrane as a helical span at residues 58 to 78 (LYPLIHLSLPHLLFNVLAIWA). Over 79 to 89 (PLNLFEETHGT) the chain is Cytoplasmic. Residues 90 to 110 (VYTGVFLNLSALFAGILYCLL) traverse the membrane as a helical segment. Residues 111–112 (GK) lie on the Lumenal side of the membrane. The helical transmembrane segment at 113 to 133 (LLYPEALVAGASGWCFTLFAY) threads the bilayer. Serine 124 serves as the catalytic Nucleophile. At 134 to 151 (YSFKESQIRPRTRIFRTD) the chain is on the cytoplasmic side. A helical transmembrane segment spans residues 152–168 (YSIPTLYTPLVLLVAIA). Topologically, residues 169 to 174 (VVIPGS) are lumenal. A helical transmembrane segment spans residues 175–191 (SFWGHFFGLCVGYAIGY). Residue histidine 179 is part of the active site. Residues 192-262 (KESWFNKITP…DNSGTVLGTA (71 aa)) are Cytoplasmic-facing. The interval 243–262 (STETPLPLHNDNSGTVLGTA) is disordered. The segment covering 252 to 262 (NDNSGTVLGTA) has biased composition (polar residues).

This sequence belongs to the peptidase S54 family. Interacts with SNX3.

The protein resides in the golgi apparatus membrane. The protein localises to the golgi apparatus. It is found in the cis-Golgi network membrane. It carries out the reaction Cleaves type-1 transmembrane domains using a catalytic dyad composed of serine and histidine that are contributed by different transmembrane domains.. Probable rhomboid-type serine protease that catalyzes intramembrane proteolysis. The sequence is that of Rhomboid-type serine protease 2 (RBD2) from Saccharomyces cerevisiae (strain ATCC 204508 / S288c) (Baker's yeast).